We begin with the raw amino-acid sequence, 329 residues long: Phosphate acyltransferase (329 aa).

Belongs to the PlsX family. In terms of assembly, homodimer. Probably interacts with PlsY.

It localises to the cytoplasm. The catalysed reaction is a fatty acyl-[ACP] + phosphate = an acyl phosphate + holo-[ACP]. It functions in the pathway lipid metabolism; phospholipid metabolism. Its function is as follows. Catalyzes the reversible formation of acyl-phosphate (acyl-PO(4)) from acyl-[acyl-carrier-protein] (acyl-ACP). This enzyme utilizes acyl-ACP as fatty acyl donor, but not acyl-CoA. This chain is Phosphate acyltransferase, found in Campylobacter lari (strain RM2100 / D67 / ATCC BAA-1060).